We begin with the raw amino-acid sequence, 350 residues long: C5a anaphylatoxin chemotactic receptor 1 (350 aa).

Residues 1 to 36 lie on the Extracellular side of the membrane; it reads APMENSTYDYTNYDSLGTLDPSTPVDNTVRRLRPTT. An N-linked (GlcNAc...) asparagine glycan is attached at N5. Sulfotyrosine is present on residues Y10 and Y13. Residues 37 to 63 form a helical membrane-spanning segment; that stretch reads IVALVIYMAVFLVGVPGNALVVWVTAL. At 64–68 the chain is on the cytoplasmic side; that stretch reads EAKRT. Residues 69 to 92 form a helical membrane-spanning segment; it reads VNAIWFLNLAVADLLSCLALPILF. Topologically, residues 93–109 are extracellular; sequence VSIIQEGHWPFGRAACS. Residues C108 and C187 are joined by a disulfide bond. The helical transmembrane segment at 110 to 131 threads the bilayer; sequence VLPSLILLNMYASILLLATISA. Topologically, residues 132–152 are cytoplasmic; that stretch reads DRFLLVFNPIWCQNTRGAGLA. The chain crosses the membrane as a helical span at residues 153 to 173; that stretch reads WLACCVAWGLALLLTIPSFLY. Over 174 to 200 the chain is Extracellular; the sequence is RKVLQDDYPPKTTCGVDYGHEGVRAER. The helical transmembrane segment at 201-226 threads the bilayer; it reads AVAIVRLVVGFLLPLFTLSVCYTFLL. The Cytoplasmic segment spans residues 227-242; the sequence is LRTWSRNGTRSTKTLK. Residues 243–265 traverse the membrane as a helical segment; that stretch reads VVVAVVVSFFIFWLPYQVMGMIL. The Extracellular segment spans residues 266-282; that stretch reads ALLHPSSATFRWAIRLD. Residues 283-303 traverse the membrane as a helical segment; that stretch reads PLCIALAYVNCCINPIIYVVA. The Cytoplasmic portion of the chain corresponds to 304 to 350; the sequence is GKGFQGQLRKSLPSLLRNVLAEESVIQGSKSFSRSTVDTVADKCQAV. S314, S317, S327, S332, S334, and S338 each carry phosphoserine.

The protein belongs to the G-protein coupled receptor 1 family. As to quaternary structure, homodimer. May also form higher-order oligomers. Interacts (when phosphorylated) with ARRB1 and ARRB2; the interaction is associated with internalization of C5aR. In terms of processing, sulfation plays a critical role in the association of C5aR with C5a, but no significant role in the ability of the receptor to transduce a signal and mobilize calcium in response to a small peptide agonist. Post-translationally, phosphorylated on serine residues in response to C5a binding, resulting in internalization of the receptor and short-term desensitization to C5a.

It is found in the cell membrane. Its subcellular location is the cytoplasmic vesicle. Its function is as follows. Receptor for the chemotactic and inflammatory peptide anaphylatoxin C5a. The ligand interacts with at least two sites on the receptor: a high-affinity site on the extracellular N-terminus, and a second site in the transmembrane region which activates downstream signaling events. Receptor activation stimulates chemotaxis, granule enzyme release, intracellular calcium release and superoxide anion production. This chain is C5a anaphylatoxin chemotactic receptor 1 (C5AR1), found in Oryctolagus cuniculus (Rabbit).